We begin with the raw amino-acid sequence, 350 residues long: Probable dual-specificity RNA methyltransferase RlmN (350 aa).

The active-site Proton acceptor is the Glu93. Residues 99–327 (SSKRLTVCVS…VSVRYSRGVQ (229 aa)) enclose the Radical SAM core domain. Cys106 and Cys332 form a disulfide bridge. [4Fe-4S] cluster is bound by residues Cys113, Cys117, and Cys120. S-adenosyl-L-methionine-binding positions include 160-161 (GE), Ser190, 213-215 (SLH), and Asn289. Cys332 functions as the S-methylcysteine intermediate in the catalytic mechanism.

This sequence belongs to the radical SAM superfamily. RlmN family. [4Fe-4S] cluster serves as cofactor.

Its subcellular location is the cytoplasm. The enzyme catalyses adenosine(2503) in 23S rRNA + 2 reduced [2Fe-2S]-[ferredoxin] + 2 S-adenosyl-L-methionine = 2-methyladenosine(2503) in 23S rRNA + 5'-deoxyadenosine + L-methionine + 2 oxidized [2Fe-2S]-[ferredoxin] + S-adenosyl-L-homocysteine. The catalysed reaction is adenosine(37) in tRNA + 2 reduced [2Fe-2S]-[ferredoxin] + 2 S-adenosyl-L-methionine = 2-methyladenosine(37) in tRNA + 5'-deoxyadenosine + L-methionine + 2 oxidized [2Fe-2S]-[ferredoxin] + S-adenosyl-L-homocysteine. In terms of biological role, specifically methylates position 2 of adenine 2503 in 23S rRNA and position 2 of adenine 37 in tRNAs. The sequence is that of Probable dual-specificity RNA methyltransferase RlmN from Synechocystis sp. (strain ATCC 27184 / PCC 6803 / Kazusa).